Here is a 332-residue protein sequence, read N- to C-terminus: MRAPDFWWRDPPSLPARLLAPVGALYGAAAARRMARPGAPAPCPVVCVGNVTLGGAGKTPTALALAALLRELGARPAFLSRGYGGSLPGPLRVDPAAHGAAEVGDEPLLIARAAPTIVARDRPAGAAACAAAGADVIVMDDGLQNPSLRKDWSLAVFDAGVGIGNGLPFPAGPLRAPLGAQWPLVSAVLVIGDAAQGRPLLAAAAARGLPALRGRLAPDAAAAAALRGRPVLAFAGIGRPDKFFESLRAVGAELRGTRAFPDHHAYRAGEIAALEREATRRGLTLVTTEKDRVRLPAAMAVAVLPVRLALAPDDAALLRARLAALLRGRAGP.

52-59 (TLGGAGKT) is a binding site for ATP.

Belongs to the LpxK family.

It catalyses the reaction a lipid A disaccharide + ATP = a lipid IVA + ADP + H(+). Its pathway is glycolipid biosynthesis; lipid IV(A) biosynthesis; lipid IV(A) from (3R)-3-hydroxytetradecanoyl-[acyl-carrier-protein] and UDP-N-acetyl-alpha-D-glucosamine: step 6/6. Transfers the gamma-phosphate of ATP to the 4'-position of a tetraacyldisaccharide 1-phosphate intermediate (termed DS-1-P) to form tetraacyldisaccharide 1,4'-bis-phosphate (lipid IVA). The chain is Tetraacyldisaccharide 4'-kinase from Methylobacterium sp. (strain 4-46).